Here is a 131-residue protein sequence, read N- to C-terminus: Class I hydrophobin 9 (131 aa).

The signal sequence occupies residues 1–23; that stretch reads MFARRAISIFAFMLVALSIFAAA. 4 cysteine pairs are disulfide-bonded: C52–C112, C59–C106, C60–C93, and C113–C126. The N-linked (GlcNAc...) asparagine glycan is linked to N53. An N-linked (GlcNAc...) asparagine glycan is attached at N115.

The protein belongs to the fungal hydrophobin family. As to quaternary structure, self-assembles to form functional amyloid fibrils called rodlets. Self-assembly into fibrillar rodlets occurs spontaneously at hydrophobic:hydrophilic interfaces and the rodlets further associate laterally to form amphipathic monolayers.

It localises to the secreted. Its subcellular location is the cell wall. Functionally, aerial growth, conidiation, and dispersal of filamentous fungi in the environment rely upon a capability of their secreting small amphipathic proteins called hydrophobins (HPBs) with low sequence identity. Class I can self-assemble into an outermost layer of rodlet bundles on aerial cell surfaces, conferring cellular hydrophobicity that supports fungal growth, development and dispersal; whereas Class II form highly ordered films at water-air interfaces through intermolecular interactions but contribute nothing to the rodlet structure. The sequence is that of Class I hydrophobin 9 from Flammulina velutipes (Agaricus velutipes).